A 1004-amino-acid chain; its full sequence is Ovochymase-2 (1004 aa).

The first 19 residues, 1 to 19 (MPTRNLLLGSILLSLAVKG), serve as a signal peptide directing secretion. Residues 20-45 (DPGPHRGARCGVSPLGSATELNYLSR) constitute a propeptide, activation peptide. The region spanning 46–295 (IVGGRESKKG…LLGWVSSQLN (250 aa)) is the Peptidase S1 1 domain. The cysteines at positions 71 and 87 are disulfide-linked. The Charge relay system role is filled by H86. Residue E113 participates in Ca(2+) binding. N128 carries an N-linked (GlcNAc...) asparagine glycan. D136 (charge relay system) is an active-site residue. 3 disulfide bridges follow: C170/C240, C201/C219, and C230/C259. S234 serves as the catalytic Charge relay system. 2 consecutive CUB domains span residues 309-419 (QDGV…YSAV) and 429-541 (CGSF…FTFV). An N-linked (GlcNAc...) asparagine glycan is attached at N351. Residues C363 and C382 are joined by a disulfide bond. N408 is a glycosylation site (N-linked (GlcNAc...) asparagine). 2 cysteine pairs are disulfide-bonded: C429–C456 and C483–C504. Over residues 547 to 558 (VEDSRQGNMPST) the composition is skewed to polar residues. Residues 547–566 (VEDSRQGNMPSTNKKETTAQ) are disordered. The Peptidase S1 2 domain maps to 580-820 (IYNSIAKVEE…FIDWIRQIMS (241 aa)). Residues 584–1004 (IAKVEEAVPH…VVPDSDSSEP (421 aa)) constitute a propeptide, activation peptide. 4 disulfides stabilise this stretch: C609–C625, C706–C776, C737–C754, and C766–C796. A glycan (N-linked (GlcNAc...) asparagine) is linked at N763. Residue N940 is glycosylated (N-linked (GlcNAc...) asparagine).

This sequence belongs to the peptidase S1 family. In terms of processing, the catalytically inactive 110 kDa form is processed both N- and C-terminally to give rise to the 66 kDa catalytically active form. As to expression, specifically expressed in the pars recta oviduct.

It is found in the secreted. It carries out the reaction Preferential cleavage at 371-Gly-Ser-Arg-|-Trp-374 of glycoprotein gp43 in Xenopus laevis coelemic egg envelope to yield gp41.. In terms of biological role, converts the glycoprotein envelope surrounding the egg from an unfertilizable to a fertilizable form during its transit through the pars recta portion of the oviduct by selectively hydrolyzing the envelope glycoprotein gp43. The egg envelope is converted to a sperm-penetrable form, via an increase in sperm binding. This is Ovochymase-2 (ovch2) from Xenopus laevis (African clawed frog).